A 33-amino-acid polypeptide reads, in one-letter code: Photosystem II reaction center protein Psb30 (33 aa).

Residues 5-25 (LIVQLTSLALITLAGPLIVAL) form a helical membrane-spanning segment.

Belongs to the Psb30/Ycf12 family. As to quaternary structure, PSII is composed of 1 copy each of membrane proteins PsbA, PsbB, PsbC, PsbD, PsbE, PsbF, PsbH, PsbI, PsbJ, PsbK, PsbL, PsbM, PsbT, PsbY, PsbZ, Psb30/Ycf12, peripheral proteins of the oxygen-evolving complex and a large number of cofactors. It forms dimeric complexes.

It localises to the plastid. Its subcellular location is the chloroplast thylakoid membrane. Functionally, a core subunit of photosystem II (PSII), probably helps stabilize the reaction center. This chain is Photosystem II reaction center protein Psb30, found in Euglena sanguinea.